We begin with the raw amino-acid sequence, 382 residues long: Gibberellin 2-beta-dioxygenase 1 (382 aa).

The region spanning 189 to 321 is the Fe2OG dioxygenase domain; that stretch reads DSDCLLRINH…RLSTIYFASP (133 aa). Residue Tyr199 coordinates 2-oxoglutarate. Fe cation-binding residues include His241, Asp243, and His302. Arg312 and Ser314 together coordinate 2-oxoglutarate.

The protein belongs to the iron/ascorbate-dependent oxidoreductase family. GA2OX subfamily. L-ascorbate serves as cofactor. It depends on Fe(2+) as a cofactor. In terms of tissue distribution, expressed in roots, shoot apex, and in the basal region of leaf primordia and young leaves.

It catalyses the reaction gibberellin A1 + 2-oxoglutarate + O2 = gibberellin A8 + succinate + CO2. Functionally, catalyzes the 2-beta-hydroxylation of several biologically active gibberellins, leading to the homeostatic regulation of their endogenous level. Catabolism of gibberellins (GAs) plays a central role in plant development. Controls the level of bioactive GAs in the shoot apical meristem, which regulates the vegetative to reproductive phase transition. In vitro, converts GA1, GA4, GA9, GA20, and GA44 to the corresponding 2-beta-hydroxylated products GA8, GA34, GA51, GA29, and GA98, respectively. This is Gibberellin 2-beta-dioxygenase 1 from Oryza sativa subsp. japonica (Rice).